The chain runs to 21 residues: Serine protease inhibitor 3 (21 aa).

It belongs to the protease inhibitor I3 (leguminous Kunitz-type inhibitor) family. In terms of tissue distribution, tubers.

It is found in the vacuole. Inhibits trypsin and chymotrypsin (serine proteases). Does not inhibit elastase, subtilisin, cathepsin L nor papain (serine and cysteine proteases). Protects the plant by inhibiting proteases of invading organisms, decreasing both hyphal growth and zoospores germination of Phytophthora infestans. In Solanum tuberosum (Potato), this protein is Serine protease inhibitor 3.